Here is a 297-residue protein sequence, read N- to C-terminus: CCAAT/enhancer-binding protein beta (297 aa).

Residues 1–22 (MHRLLAWDAACLPPPPAAFRPM) are required for Lys-134 sumoylation. Arg-3 carries the post-translational modification Asymmetric dimethylarginine; by CARM1. Residues 22-105 (MEVANFYYEP…YGAKPSKKPS (84 aa)) form a required for MYC transcriptional repression region. Lys-39 carries the post-translational modification N6-acetyllysine; alternate. Lys-39 is modified (N6-methylated lysine; alternate). Residues Lys-99 and Lys-102 each carry the N6-acetyllysine; by KAT2A and KAT2B modification. At Lys-103 the chain carries N6-acetyllysine; by KAT2A and KAT2B; alternate. A Glycyl lysine isopeptide (Lys-Gly) (interchain with G-Cter in SUMO2); alternate cross-link involves residue Lys-103. Residue Ser-105 is modified to Phosphoserine; by RPS6KA1 and PKC/PRKCA. Residue Lys-134 forms a Glycyl lysine isopeptide (Lys-Gly) (interchain with G-Cter in SUMO2); alternate linkage. Lys-134 is covalently cross-linked (Glycyl lysine isopeptide (Lys-Gly) (interchain with G-Cter in SUMO); alternate). Residue Lys-145 forms a Glycyl lysine isopeptide (Lys-Gly) (interchain with G-Cter in SUMO2) linkage. The segment at 172–201 (SGSSGSLSTSSSSSPPGTPSPADAKAAPAA) is disordered. Thr-180 carries the phosphothreonine; by GSK3-beta modification. O-linked (GlcNAc) serine glycosylation is found at Ser-181 and Ser-182. The residue at position 185 (Ser-185) is a Phosphoserine; by GSK3-beta. Residue Thr-189 is modified to Phosphothreonine; by RPS6KA1, CDK2 and MAPK. Residues Lys-212 and Lys-214 each participate in a glycyl lysine isopeptide (Lys-Gly) (interchain with G-Cter in SUMO2) cross-link. The 64-residue stretch at 223–286 (SDEYKMRRER…STLRNLFKQL (64 aa)) folds into the bZIP domain. The interval 227-247 (KMRRERNNIAVRKSRDKAKMR) is basic motif. Ser-240 is modified (phosphoserine; by PKC/PRKCA). The interval 249-256 (LETQHKVL) is leucine-zipper. Ser-277 is modified (phosphoserine; by CaMK2). Residue Lys-284 forms a Glycyl lysine isopeptide (Lys-Gly) (interchain with G-Cter in SUMO2) linkage.

Belongs to the bZIP family. C/EBP subfamily. As to quaternary structure, binds DNA as a homodimer and as a heterodimer. Interacts with MYB; within the complex, MYB and CEBPB bind to different promoter regions. Interacts with ATF4. Binds DNA as a heterodimer with ATF4. Can form stable heterodimers with CEBPA, CEBPD, CEBPE and CEBPG. Interacts with SIX1. Isoform 2 and isoform 3 also form heterodimers. Interacts with TRIM28 and PTGES2. Interacts with PRDM16. Interacts with CCDC85B. Forms a complex with THOC5. Interacts with ZNF638; this interaction increases transcriptional activation. Interacts with CIDEA and CIDEC; these interactions increase transcriptional activation of a subset of CEBPB downstream target genes. Interacts with DDIT3/CHOP. Interacts with EP300; recruits EP300 to chromatin. Interacts with RORA; the interaction disrupts interaction with EP300. Interacts (not methylated) with MED23, MED26, SMARCA2, SMARCB1 and SMARCC1. Interacts with KAT2A and KAT2B. Interacts with ATF5; EP300 is required for ATF5 and CEBPB interaction and DNA binding. Interacts with NFE2L1; the heterodimer represses expression of DSPP during odontoblast differentiation. In terms of processing, phosphorylated at Thr-189 by MAPK and CDK2, serves to prime phosphorylation at Thr-180 and Ser-185 by GSK3B and acquire DNA-binding as well as transactivation activities, required to induce adipogenesis. MAPK and CDK2 act sequentially to maintain Thr-189 in the primed phosphorylated state during mitotical cloning expansion and thereby progression of terminal differentiation. Phosphorylation at Ser-105 enhances transactivation activity. Phosphorylation at Ser-277 in response to calcium increases transactivation activity. Phosphorylated at Thr-189 by RPS6KA1. Post-translationally, methylated. Methylation at Arg-3 by CARM1 and at Lys-39 by EHMT2 inhibit transactivation activity. Methylation is probably inhibited by phosphorylation at Thr-189. Sumoylated by polymeric chains of SUMO2 or SUMO3. Sumoylation at Lys-134 is required for inhibition of T-cells proliferation. In adipocytes, sumoylation at Lys-134 by PIAS1 leads to ubiquitination and subsequent proteasomal degradation. Desumoylated by SENP2, which abolishes ubiquitination and stabilizes protein levels. In terms of processing, ubiquitinated, leading to proteasomal degradation. Post-translationally, O-glycosylated, glycosylation at Ser-181 and Ser-182 prevents phosphorylation on Thr-189, Ser-185 and Thr-180 and DNA binding activity which delays the adipocyte differentiation program. Acetylated. Acetylation at Lys-39 is an important and dynamic regulatory event that contributes to its ability to transactivate target genes, including those associated with adipogenesis and adipocyte function. Deacetylation by HDAC1 represses its transactivation activity. Acetylated by KAT2A and KAT2B within a cluster of lysine residues between amino acids 99-103, this acetylation is strongly induced by glucocorticoid treatment and enhances transactivation activity. Liver and lung.

The protein localises to the nucleus. The protein resides in the cytoplasm. Its function is as follows. Important transcription factor regulating the expression of genes involved in immune and inflammatory responses. Also plays a significant role in adipogenesis, as well as in the gluconeogenic pathway, liver regeneration, and hematopoiesis. The consensus recognition site is 5'-T[TG]NNGNAA[TG]-3'. Its functional capacity is governed by protein interactions and post-translational protein modifications. During early embryogenesis, plays essential and redundant roles with CEBPA. Has a promitotic effect on many cell types such as hepatocytes and adipocytes but has an antiproliferative effect on T-cells by repressing MYC expression, facilitating differentiation along the T-helper 2 lineage. Binds to regulatory regions of several acute-phase and cytokines genes and plays a role in the regulation of acute-phase reaction and inflammation. Also plays a role in intracellular bacteria killing. During adipogenesis, is rapidly expressed and, after activation by phosphorylation, induces CEBPA and PPARG, which turn on the series of adipocyte genes that give rise to the adipocyte phenotype. The delayed transactivation of the CEBPA and PPARG genes by CEBPB appears necessary to allow mitotic clonal expansion and thereby progression of terminal differentiation. Essential for female reproduction because of a critical role in ovarian follicle development. Restricts osteoclastogenesis: together with NFE2L1; represses expression of DSPP during odontoblast differentiation. In terms of biological role, essential for gene expression induction in activated macrophages. Plays a major role in immune responses such as CD4(+) T-cell response, granuloma formation and endotoxin shock. Not essential for intracellular bacteria killing. Functionally, acts as a dominant negative through heterodimerization with isoform 2. Promotes osteoblast differentiation and osteoclastogenesis. This Rattus norvegicus (Rat) protein is CCAAT/enhancer-binding protein beta.